The chain runs to 439 residues: Chitinase-like protein Idgf1 (439 aa).

An N-terminal signal peptide occupies residues 1 to 20; that stretch reads MRFQLCYLLGLLSVTSLSHA. The GH18 domain maps to 22-439; it reads SNLICYYDST…IVRSIKYFMG (418 aa). A disulfide bridge connects residues C26 and C53. N-linked (GlcNAc...) asparagine glycans are attached at residues N122, N218, and N346. Residues C340 and C423 are joined by a disulfide bond.

Belongs to the glycosyl hydrolase 18 family. IDGF subfamily. Glycosylated.

The protein localises to the secreted. Cooperates with insulin-like peptides to stimulate the proliferation, polarization and motility of imaginal disk cells. May act by stabilizing the binding of insulin-like peptides to its receptor through a simultaneous interaction with both molecules to form a multiprotein signaling complex. The chain is Chitinase-like protein Idgf1 (Idgf1) from Drosophila yakuba (Fruit fly).